Here is a 483-residue protein sequence, read N- to C-terminus: Aspartyl/glutamyl-tRNA(Asn/Gln) amidotransferase subunit B (483 aa).

This sequence belongs to the GatB/GatE family. GatB subfamily. In terms of assembly, heterotrimer of A, B and C subunits.

It catalyses the reaction L-glutamyl-tRNA(Gln) + L-glutamine + ATP + H2O = L-glutaminyl-tRNA(Gln) + L-glutamate + ADP + phosphate + H(+). The catalysed reaction is L-aspartyl-tRNA(Asn) + L-glutamine + ATP + H2O = L-asparaginyl-tRNA(Asn) + L-glutamate + ADP + phosphate + 2 H(+). Functionally, allows the formation of correctly charged Asn-tRNA(Asn) or Gln-tRNA(Gln) through the transamidation of misacylated Asp-tRNA(Asn) or Glu-tRNA(Gln) in organisms which lack either or both of asparaginyl-tRNA or glutaminyl-tRNA synthetases. The reaction takes place in the presence of glutamine and ATP through an activated phospho-Asp-tRNA(Asn) or phospho-Glu-tRNA(Gln). The polypeptide is Aspartyl/glutamyl-tRNA(Asn/Gln) amidotransferase subunit B (Rickettsia africae (strain ESF-5)).